The chain runs to 431 residues: Probable zinc metalloprotease Lema_P086240 (431 aa).

Asn-46 carries an N-linked (GlcNAc...) asparagine glycan. Zn(2+)-binding residues include His-117, Asp-137, and Glu-170. N-linked (GlcNAc...) asparagine glycosylation occurs at Asn-185. Position 197 (Asp-197) interacts with Zn(2+). Asn-258, Asn-310, Asn-349, Asn-359, and Asn-369 each carry an N-linked (GlcNAc...) asparagine glycan. Residues 344–431 (PGMPRNVTID…KSPAVYPFPG (88 aa)) form the Fibronectin type-III domain.

Belongs to the peptidase M28 family. M28B subfamily. Zn(2+) is required as a cofactor.

The protein resides in the secreted. In Leptosphaeria maculans (strain JN3 / isolate v23.1.3 / race Av1-4-5-6-7-8) (Blackleg fungus), this protein is Probable zinc metalloprotease Lema_P086240.